We begin with the raw amino-acid sequence, 442 residues long: Transducin beta-like protein 2 (442 aa).

The tract at residues 36–71 (EKPSQPVCQKENEPKKSGSKKQKQNQRVRKEKPQQH) is disordered. Residues 52–65 (SGSKKQKQNQRVRK) are compositionally biased toward basic residues. WD repeat units lie at residues 84 to 123 (SHSG…QREH), 130 to 170 (VELD…DGGF), 182 to 222 (KHKA…STIN), 224 to 263 (NQMN…GEFQ), 273 to 312 (GHSA…KKQQ), 323 to 362 (EEAS…KEEY), and 366 to 404 (VHGE…RAVV). Lys-164 is covalently cross-linked (Glycyl lysine isopeptide (Lys-Gly) (interchain with G-Cter in SUMO2)). The residue at position 428 (Thr-428) is a Phosphothreonine.

The protein is Transducin beta-like protein 2 (Tbl2) of Mus musculus (Mouse).